The following is a 98-amino-acid chain: NADH-ubiquinone oxidoreductase chain 4L (98 aa).

3 helical membrane-spanning segments follow: residues 1-21 (MPII…GMLI), 29-49 (SLLC…LMAL), and 58-78 (IVPI…LALL).

The protein belongs to the complex I subunit 4L family. Core subunit of respiratory chain NADH dehydrogenase (Complex I) which is composed of 45 different subunits.

The protein resides in the mitochondrion inner membrane. It carries out the reaction a ubiquinone + NADH + 5 H(+)(in) = a ubiquinol + NAD(+) + 4 H(+)(out). Functionally, core subunit of the mitochondrial membrane respiratory chain NADH dehydrogenase (Complex I) which catalyzes electron transfer from NADH through the respiratory chain, using ubiquinone as an electron acceptor. Part of the enzyme membrane arm which is embedded in the lipid bilayer and involved in proton translocation. The protein is NADH-ubiquinone oxidoreductase chain 4L (MT-ND4L) of Nasalis larvatus (Proboscis monkey).